We begin with the raw amino-acid sequence, 338 residues long: Photosystem II assembly lipoprotein Ycf48 (338 aa).

Residues 1–23 (MKKIITSFPNLLLSILLCFVLSS) form the signal peptide. C24 is lipidated: N-palmitoyl cysteine. C24 carries S-diacylglycerol cysteine lipidation.

It belongs to the Ycf48 family. In terms of assembly, part of early PSII assembly complexes which includes D1 (psbA) and PsbI; not found in mature PSII. Binds to the lumenal side of PSII complexes. Interacts with YidC.

The protein resides in the cellular thylakoid membrane. In terms of biological role, a factor required for optimal assembly of photosystem II (PSII), acting in the early stages of PSII assembly. Also plays a role in replacement of photodamaged D1 (psbA). Assists YidC in synthesis of chlorophyll-binding proteins. The sequence is that of Photosystem II assembly lipoprotein Ycf48 from Prochlorococcus marinus (strain MIT 9312).